The sequence spans 310 residues: MFKHVTVLLKETVDGLNIKPDGTYVDCTLGGGGHSSYLLSQLTEGGKLIAFDQDEIAIQNAKEKFSSYGEQFITVKSNFRYLAEKLQEIGITEVDGILFDLGVSSPQLDTPERGFSYHHDAPLDMRMDQDAPLTAYDVVNSWSYEQLVRIFFQYGEEKFSKQIARKIEAYRENKAIETTGELVELIKEGIPAPARRTGGHPAKRVFQAIRIAVNDELKVFEEALESAIEMVKPGGRVSVITFHSLEDRICKTTFKRNSTTPQLPPGLPIIPDEFKPKLKLITRKPILPSDIELEENNRARSAKLRIAEKR.

S-adenosyl-L-methionine contacts are provided by residues 32 to 34, Asp52, Phe79, Asp100, and Gln107; that span reads GGH.

It belongs to the methyltransferase superfamily. RsmH family.

The protein localises to the cytoplasm. It carries out the reaction cytidine(1402) in 16S rRNA + S-adenosyl-L-methionine = N(4)-methylcytidine(1402) in 16S rRNA + S-adenosyl-L-homocysteine + H(+). Functionally, specifically methylates the N4 position of cytidine in position 1402 (C1402) of 16S rRNA. The sequence is that of Ribosomal RNA small subunit methyltransferase H from Bacillus cereus (strain B4264).